The primary structure comprises 221 residues: Thiamine-phosphate synthase (221 aa).

Residues 41–45 (QLRDK) and Asn-82 contribute to the 4-amino-2-methyl-5-(diphosphooxymethyl)pyrimidine site. Residues Asp-83 and Asp-102 each coordinate Mg(2+). Ser-120 contacts 4-amino-2-methyl-5-(diphosphooxymethyl)pyrimidine. 146–148 (TPT) serves as a coordination point for 2-[(2R,5Z)-2-carboxy-4-methylthiazol-5(2H)-ylidene]ethyl phosphate. Lys-149 is a binding site for 4-amino-2-methyl-5-(diphosphooxymethyl)pyrimidine. Position 177 (Gly-177) interacts with 2-[(2R,5Z)-2-carboxy-4-methylthiazol-5(2H)-ylidene]ethyl phosphate.

It belongs to the thiamine-phosphate synthase family. It depends on Mg(2+) as a cofactor.

It catalyses the reaction 2-[(2R,5Z)-2-carboxy-4-methylthiazol-5(2H)-ylidene]ethyl phosphate + 4-amino-2-methyl-5-(diphosphooxymethyl)pyrimidine + 2 H(+) = thiamine phosphate + CO2 + diphosphate. The catalysed reaction is 2-(2-carboxy-4-methylthiazol-5-yl)ethyl phosphate + 4-amino-2-methyl-5-(diphosphooxymethyl)pyrimidine + 2 H(+) = thiamine phosphate + CO2 + diphosphate. It carries out the reaction 4-methyl-5-(2-phosphooxyethyl)-thiazole + 4-amino-2-methyl-5-(diphosphooxymethyl)pyrimidine + H(+) = thiamine phosphate + diphosphate. It functions in the pathway cofactor biosynthesis; thiamine diphosphate biosynthesis; thiamine phosphate from 4-amino-2-methyl-5-diphosphomethylpyrimidine and 4-methyl-5-(2-phosphoethyl)-thiazole: step 1/1. In terms of biological role, condenses 4-methyl-5-(beta-hydroxyethyl)thiazole monophosphate (THZ-P) and 2-methyl-4-amino-5-hydroxymethyl pyrimidine pyrophosphate (HMP-PP) to form thiamine monophosphate (TMP). This Mycolicibacterium vanbaalenii (strain DSM 7251 / JCM 13017 / BCRC 16820 / KCTC 9966 / NRRL B-24157 / PYR-1) (Mycobacterium vanbaalenii) protein is Thiamine-phosphate synthase.